A 386-amino-acid chain; its full sequence is Succinyl-diaminopimelate desuccinylase (386 aa).

Residue histidine 73 participates in Zn(2+) binding. The active site involves aspartate 75. Aspartate 106 contributes to the Zn(2+) binding site. Residue glutamate 140 is the Proton acceptor of the active site. Residues glutamate 141, glutamate 169, and histidine 355 each contribute to the Zn(2+) site.

Belongs to the peptidase M20A family. DapE subfamily. Homodimer. The cofactor is Zn(2+). It depends on Co(2+) as a cofactor.

The enzyme catalyses N-succinyl-(2S,6S)-2,6-diaminopimelate + H2O = (2S,6S)-2,6-diaminopimelate + succinate. Its pathway is amino-acid biosynthesis; L-lysine biosynthesis via DAP pathway; LL-2,6-diaminopimelate from (S)-tetrahydrodipicolinate (succinylase route): step 3/3. In terms of biological role, catalyzes the hydrolysis of N-succinyl-L,L-diaminopimelic acid (SDAP), forming succinate and LL-2,6-diaminopimelate (DAP), an intermediate involved in the bacterial biosynthesis of lysine and meso-diaminopimelic acid, an essential component of bacterial cell walls. In Delftia acidovorans (strain DSM 14801 / SPH-1), this protein is Succinyl-diaminopimelate desuccinylase.